A 189-amino-acid polypeptide reads, in one-letter code: Large ribosomal subunit protein bL9 (189 aa).

Belongs to the bacterial ribosomal protein bL9 family.

Functionally, binds to the 23S rRNA. The sequence is that of Large ribosomal subunit protein bL9 from Brucella canis (strain ATCC 23365 / NCTC 10854 / RM-666).